Reading from the N-terminus, the 767-residue chain is Syn-copalyl diphosphate synthase (767 aa).

The tract at residues 45-74 (GPMLISKSPPYPASEETREWEAEGQHEHTD) is disordered. Over residues 59-74 (EETREWEAEGQHEHTD) the composition is skewed to basic and acidic residues. K233 serves as a coordination point for substrate. Residues D365 and D367 each contribute to the Mg(2+) site. Residues 365-368 (DIDD) carry the DXDD motif motif. K453 is a substrate binding site.

Mg(2+) serves as cofactor.

The enzyme catalyses (2E,6E,10E)-geranylgeranyl diphosphate = 9alpha-copalyl diphosphate. In terms of biological role, catalyzes the conversion of geranylgeranyl diphosphate to the phytoalexin precursor syn-copalyl diphosphate. In Oryza sativa subsp. indica (Rice), this protein is Syn-copalyl diphosphate synthase (CPS4).